A 273-amino-acid polypeptide reads, in one-letter code: Phosphate import ATP-binding protein PstB (273 aa).

The interval 1–20 is disordered; that stretch reads MTTVSTAAASGPAVPPPRID. The ABC transporter domain occupies 27–268; that stretch reads VAARNLNFYY…PSDRRTQDYI (242 aa). Position 59–66 (59–66) interacts with ATP; that stretch reads GPSGCGKS.

The protein belongs to the ABC transporter superfamily. Phosphate importer (TC 3.A.1.7) family. In terms of assembly, the complex is composed of two ATP-binding proteins (PstB), two transmembrane proteins (PstC and PstA) and a solute-binding protein (PstS).

Its subcellular location is the cell inner membrane. It carries out the reaction phosphate(out) + ATP + H2O = ADP + 2 phosphate(in) + H(+). Part of the ABC transporter complex PstSACB involved in phosphate import. Responsible for energy coupling to the transport system. The polypeptide is Phosphate import ATP-binding protein PstB (Nitrobacter winogradskyi (strain ATCC 25391 / DSM 10237 / CIP 104748 / NCIMB 11846 / Nb-255)).